A 460-amino-acid chain; its full sequence is ATP synthase subunit beta (460 aa).

An ATP-binding site is contributed by 150 to 157 (GGAGVGKT).

The protein belongs to the ATPase alpha/beta chains family. As to quaternary structure, F-type ATPases have 2 components, CF(1) - the catalytic core - and CF(0) - the membrane proton channel. CF(1) has five subunits: alpha(3), beta(3), gamma(1), delta(1), epsilon(1). CF(0) has three main subunits: a(1), b(2) and c(9-12). The alpha and beta chains form an alternating ring which encloses part of the gamma chain. CF(1) is attached to CF(0) by a central stalk formed by the gamma and epsilon chains, while a peripheral stalk is formed by the delta and b chains.

It localises to the cell inner membrane. It carries out the reaction ATP + H2O + 4 H(+)(in) = ADP + phosphate + 5 H(+)(out). Produces ATP from ADP in the presence of a proton gradient across the membrane. The catalytic sites are hosted primarily by the beta subunits. This is ATP synthase subunit beta from Sodalis glossinidius (strain morsitans).